The primary structure comprises 66 residues: Toxin Aah6 (66 aa).

An LCN-type CS-alpha/beta domain is found at Arg2 to Ser65. N-linked (GlcNAc...) asparagine glycosylation is present at Asn9. Cystine bridges form between Cys13-Cys64, Cys17-Cys40, Cys26-Cys45, and Cys30-Cys47.

The protein belongs to the long (4 C-C) scorpion toxin superfamily. Sodium channel inhibitor family. Beta subfamily. In terms of processing, N-glycans are core-fucosylated, heterogeneous and short which could be the result of extensive trimming. Expressed by the venom gland.

Its subcellular location is the secreted. Beta toxins bind voltage-independently at site-4 of sodium channels and shift the voltage of activation toward more negative potentials thereby affecting sodium channel activation and promoting spontaneous and repetitive firing. This toxin is active only on insects. This toxin has very low anti-insect activity. The protein is Toxin Aah6 of Androctonus australis (Sahara scorpion).